We begin with the raw amino-acid sequence, 165 residues long: Large ribosomal subunit protein uL10 (165 aa).

It belongs to the universal ribosomal protein uL10 family. In terms of assembly, part of the ribosomal stalk of the 50S ribosomal subunit. The N-terminus interacts with L11 and the large rRNA to form the base of the stalk. The C-terminus forms an elongated spine to which L12 dimers bind in a sequential fashion forming a multimeric L10(L12)X complex.

Its function is as follows. Forms part of the ribosomal stalk, playing a central role in the interaction of the ribosome with GTP-bound translation factors. This is Large ribosomal subunit protein uL10 from Dechloromonas aromatica (strain RCB).